A 108-amino-acid polypeptide reads, in one-letter code: UPF0145 protein Tery_3795 (108 aa).

The protein belongs to the UPF0145 family.

The sequence is that of UPF0145 protein Tery_3795 from Trichodesmium erythraeum (strain IMS101).